Consider the following 148-residue polypeptide: NADH-quinone oxidoreductase subunit C (148 aa).

It belongs to the complex I 30 kDa subunit family. In terms of assembly, NDH-1 is composed of 14 different subunits. Subunits NuoB, C, D, E, F, and G constitute the peripheral sector of the complex.

Its subcellular location is the cell membrane. It catalyses the reaction a quinone + NADH + 5 H(+)(in) = a quinol + NAD(+) + 4 H(+)(out). NDH-1 shuttles electrons from NADH, via FMN and iron-sulfur (Fe-S) centers, to quinones in the respiratory chain. The immediate electron acceptor for the enzyme in this species is believed to be a menaquinone. Couples the redox reaction to proton translocation (for every two electrons transferred, four hydrogen ions are translocated across the cytoplasmic membrane), and thus conserves the redox energy in a proton gradient. This Moorella thermoacetica (strain ATCC 39073 / JCM 9320) protein is NADH-quinone oxidoreductase subunit C.